The sequence spans 621 residues: MSPVFPMLTVLTMFYYICLRRRARTATRGEMMNTHRAIESNSQTSPLNAEVVQYAKEVVDFSSHYGSENSMSYTMWNLAGVPNVFPSSGDFTQTAVFRTYGTWWDQCPSASLPFKRTPPNFQSQDYVELTFEQQVYPTAVHVLETYHPGAVIRILACSANPYSPNPPAEVRWEILWSERPTKVNASQARQFKPCIKQINFPTNLIRLEVNSSLLEYYTELDAVVLHGVKDKPVLSLKTSLIDMNDIEDDAYAEKDGCGMDSLNKKFSSAVLGEGPNNGYFDKLPYELIQLILNHLTLPDLCRLAQTCKLLSQHCCDPLQYIHLNLQPYWAKLDDTSLEFLQSRCTLVQWLNLSWTGNRGFISVAGFSRFLKVCGSELVRLELSCSHFLNETCLEVISEMCPNLQALNLSSCDKLPPQAFNHIAKLCSLKRLVLYRTKVEQTALLSILNFCSELQHLSLGSCVMIEDYDVIASMIGAKCKKLRTLDLWRCKNITENGIAELASGCPLLEELDLGWCPTLQSSTGCFTRLAHQLPNLQKLFLTANRSVCDTDIDELACNCTRLQQLDILGTRMVSPASLRKLLESCKDLSLLDVSFCSQIDNRAVLELNASFPKVFIKKSFTQ.

Asymmetric dimethylarginine is present on arginine 28. One can recognise an F-box domain in the interval 277-332 (NGYFDKLPYELIQLILNHLTLPDLCRLAQTCKLLSQHCCDPLQYIHLNLQPYWAKL). 9 LRR repeats span residues 376-397 (ELVR…EVIS), 402-421 (NLQA…AFNH), 427-448 (SLKR…SILN), 452-474 (ELQH…ASMI), 480-501 (KLRT…AELA), 504-524 (CPLL…STGC), 532-558 (LPNL…ACNC), 559-583 (TRLQ…LLES), and 584-609 (CKDL…LNAS).

Part of a SCF (SKP1-CUL1-F-box) protein ligase complex. Interacts with VCP. Interacts with PPTC7; this interaction promotes destruction of BNIP3 and NIX and mitophagy suppression. Expressed in heart, kidney, liver, lung, pancreas, and placenta, but not in skeletal muscle.

Its subcellular location is the cytoplasm. The protein resides in the nucleus. It is found in the mitochondrion outer membrane. In terms of biological role, substrate-recognition component of the mitochondria-localized SCF-FBXL4 ubiquitin E3 ligase complex that plays a role in the restriction of mitophagy by controlling the degradation of BNIP3 and NIX mitophagy receptors. Rescues also mitochondrial injury through reverting hyperactivation of DRP1-mediated mitochondrial fission. This Homo sapiens (Human) protein is F-box/LRR-repeat protein 4 (FBXL4).